The primary structure comprises 589 residues: Transcription factor MYC4 (589 aa).

The segment at 99–150 is JAZ-interaction domain; the sequence is NTVLLGWGDGYYKGEEEKSRKKKSNPASAAEQEHRKRVIRELNSLISGGVGG. Disordered regions lie at residues 114 to 133, 291 to 326, 340 to 359, and 381 to 422; these read EEKS…QEHR, AAPV…PNPK, IENG…VSNN, and ASVA…EAER. Residues 296-308 show a composition bias toward low complexity; sequence NNGGNDSTSNSDS. The segment covering 309–322 has biased composition (polar residues); the sequence is QPISKLCNGSSVEN. The segment covering 381-398 has biased composition (basic and acidic residues); sequence ASVAKEAESNRVVVEPEK. Over residues 399-408 the composition is skewed to basic residues; that stretch reads KPRKRGRKPA. A compositionally biased stretch (basic and acidic residues) spans 409–422; sequence NGREEPLNHVEAER. Residues 412–461 enclose the bHLH domain; that stretch reads EEPLNHVEAERQRREKLNQRFYSLRAVVPNVSKMDKASLLGDAISYISEL.

In terms of assembly, homo- and heterodimer. Interacts with MYB28, MYB29, MYB34, MYB51, MYB76, MYB122, MYC3, AFPH2/NINJA and the JAZ repressors TIFY10A/JAZ1, TIFY10B/JAZ2, TIFY6B/JAZ3, TIFY6A/JAZ4, TIFY11A/JAZ5, TIFY11B/JAZ6, TIFY5B/JAZ7, TIFY5A/JAZ8, TIFY7/JAZ9, TIFY9/JAZ10, TIFY3A/JAZ11 and TIFY3B/JAZ12. Expressed constitutively at low levels. Preferentially expressed in vascular tissues.

It is found in the nucleus. Functionally, transcription factor involved in jasmonic acid (JA) gene regulation. With MYC2 and MYC3, controls additively subsets of JA-dependent responses. Can form complexes with all known glucosinolate-related MYBs to regulate glucosinolate biosynthesis. Binds to the G-box (5'-CACGTG-3') of promoters. Activates multiple TIFY/JAZ promoters. This Arabidopsis thaliana (Mouse-ear cress) protein is Transcription factor MYC4 (MYC4).